The chain runs to 629 residues: 1-deoxy-D-xylulose-5-phosphate synthase (629 aa).

Residues His-78 and 119 to 121 each bind thiamine diphosphate; that span reads AHS. Asp-150 is a binding site for Mg(2+). Thiamine diphosphate is bound by residues 151-152, Asn-179, Tyr-286, and Glu-368; that span reads GA. Asn-179 contacts Mg(2+).

Belongs to the transketolase family. DXPS subfamily. As to quaternary structure, homodimer. Requires Mg(2+) as cofactor. It depends on thiamine diphosphate as a cofactor.

The catalysed reaction is D-glyceraldehyde 3-phosphate + pyruvate + H(+) = 1-deoxy-D-xylulose 5-phosphate + CO2. Its pathway is metabolic intermediate biosynthesis; 1-deoxy-D-xylulose 5-phosphate biosynthesis; 1-deoxy-D-xylulose 5-phosphate from D-glyceraldehyde 3-phosphate and pyruvate: step 1/1. In terms of biological role, catalyzes the acyloin condensation reaction between C atoms 2 and 3 of pyruvate and glyceraldehyde 3-phosphate to yield 1-deoxy-D-xylulose-5-phosphate (DXP). This chain is 1-deoxy-D-xylulose-5-phosphate synthase, found in Acidovorax ebreus (strain TPSY) (Diaphorobacter sp. (strain TPSY)).